The primary structure comprises 257 residues: Mitochondrial distribution and morphology protein 12 (257 aa).

In terms of domain architecture, SMP-LTD spans 1-256 (MSFEINWEKL…WPSWVNLDFN (256 aa)). The tract at residues 74–98 (YEEDNETSSEMHGRDGQNVGESGEE) is disordered.

It belongs to the MDM12 family. As to quaternary structure, component of the ER-mitochondria encounter structure (ERMES) or MDM complex, composed of MMM1, MDM10, MDM12 and MDM34. An MMM1 homodimer associates with one molecule of MDM12 on each side in a pairwise head-to-tail manner, and the SMP-LTD domains of MMM1 and MDM12 generate a continuous hydrophobic tunnel for phospholipid trafficking.

It is found in the mitochondrion outer membrane. Its subcellular location is the endoplasmic reticulum membrane. In terms of biological role, component of the ERMES/MDM complex, which serves as a molecular tether to connect the endoplasmic reticulum (ER) and mitochondria. Components of this complex are involved in the control of mitochondrial shape and protein biogenesis, and function in nonvesicular lipid trafficking between the ER and mitochondria. MDM12 is required for the interaction of the ER-resident membrane protein MMM1 and the outer mitochondrial membrane-resident beta-barrel protein MDM10. The MDM12-MMM1 subcomplex functions in the major beta-barrel assembly pathway that is responsible for biogenesis of all mitochondrial outer membrane beta-barrel proteins, and acts in a late step after the SAM complex. The MDM10-MDM12-MMM1 subcomplex further acts in the TOM40-specific pathway after the action of the MDM12-MMM1 complex. Essential for establishing and maintaining the structure of mitochondria and maintenance of mtDNA nucleoids. This Candida glabrata (strain ATCC 2001 / BCRC 20586 / JCM 3761 / NBRC 0622 / NRRL Y-65 / CBS 138) (Yeast) protein is Mitochondrial distribution and morphology protein 12.